An 80-amino-acid chain; its full sequence is MLIPVVCFTCGFPIGTYAAIFDKARTEYIKTKMDGTLPQNIPLDASLQIELKDLITALGIPMRVCCRTHLITTLDYRKYY.

Residues C7, C10, C65, and C66 each contribute to the Zn(2+) site.

This sequence belongs to the archaeal RpoN/eukaryotic RPB10 RNA polymerase subunit family. As to quaternary structure, part of the viral DNA-directed RNA polymerase that consists of 8 polII-like subunits (RPB1, RPB2, RPB3, RPB5, RPB6, RPB7, RPB9, RPB10), a capping enzyme and a termination factor.

It is found in the host cytoplasm. In terms of biological role, component of the DNA-directed RNA polymerase (RNAP) that catalyzes the transcription in the cytoplasm of viral DNA into RNA using the four ribonucleoside triphosphates as substrates. The chain is DNA-directed RNA polymerase RPB10 homolog from African swine fever virus (strain Badajoz 1971 Vero-adapted) (Ba71V).